A 606-amino-acid polypeptide reads, in one-letter code: Glutamine--fructose-6-phosphate aminotransferase [isomerizing] (606 aa).

Cysteine 2 functions as the Nucleophile; for GATase activity in the catalytic mechanism. The Glutamine amidotransferase type-2 domain occupies 2–218 (CGIFGYLGEK…SGELAVLRIG (217 aa)). SIS domains follow at residues 278 to 424 (FTES…HRQV) and 448 to 596 (LDSS…VDRP). Residue lysine 601 is the For Fru-6P isomerization activity of the active site.

As to quaternary structure, homodimer.

The protein resides in the cytoplasm. It catalyses the reaction D-fructose 6-phosphate + L-glutamine = D-glucosamine 6-phosphate + L-glutamate. Catalyzes the first step in hexosamine metabolism, converting fructose-6P into glucosamine-6P using glutamine as a nitrogen source. In Chlamydia trachomatis serovar D (strain ATCC VR-885 / DSM 19411 / UW-3/Cx), this protein is Glutamine--fructose-6-phosphate aminotransferase [isomerizing].